The following is a 415-amino-acid chain: Multidrug resistance protein MdtA (415 aa).

The signal sequence occupies residues 1-21 (MKGSYKSRWVIVIVVVIAAIA). The span at 31–47 (DSQSAAPGATKQAQQSP) shows a compositional bias: polar residues. 2 disordered regions span residues 31 to 60 (DSQS…GPLA) and 392 to 415 (EAQS…GARS). Residues 399 to 415 (PEEKATSREYAKKGARS) show a composition bias toward basic and acidic residues.

It belongs to the membrane fusion protein (MFP) (TC 8.A.1) family. In terms of assembly, part of a tripartite efflux system composed of MdtA, MdtB and MdtC.

The protein localises to the cell inner membrane. Its function is as follows. The MdtABC tripartite complex confers resistance against novobiocin and deoxycholate. This chain is Multidrug resistance protein MdtA, found in Escherichia coli O8 (strain IAI1).